A 295-amino-acid chain; its full sequence is sn-glycerol-3-phosphate transport system permease protein UgpA (295 aa).

At 1-11 (MSSSRPVFRSR) the chain is on the cytoplasmic side. A helical membrane pass occupies residues 12-32 (WLPYLLVAPQLIITVIFFIWP). The Periplasmic portion of the chain corresponds to 33-80 (AGEALWYSLQSVDPFGFSSRFVGLDNFVALFHDSYYIDSFWTTIKFST). Residues 76 to 284 (IKFSTFVTVS…FLVIVLTVMQ (209 aa)) form the ABC transmembrane type-1 domain. The chain crosses the membrane as a helical span at residues 81 to 101 (FVTVSGLLVSLFFAALVEYIV). Topologically, residues 102 to 109 (RGSRFYQT) are cytoplasmic. Residues 110–130 (LMLLPYAVAPAVAAVLWIFLF) traverse the membrane as a helical segment. At 131–156 (NPGRGLITHFLAEFGYDWNHAQNSGQ) the chain is on the periplasmic side. Residues 157–177 (AMFLVVFASVWKQISYNFLFF) form a helical membrane-spanning segment. The Cytoplasmic portion of the chain corresponds to 178–207 (YAALQSIPRSLIEAAAIDGAGPIRRFFKIA). The chain crosses the membrane as a helical span at residues 208–228 (LPLIAPVSFFLLVVNLVYAFF). Residues 229 to 262 (DTFPVIDAATSGGPVQATTTLIYKIYREGFTGLD) lie on the Periplasmic side of the membrane. Residues 263–283 (LASSAAQSVVLMFLVIVLTVM) traverse the membrane as a helical segment. The Cytoplasmic portion of the chain corresponds to 284 to 295 (QFRYVESKVRYQ).

This sequence belongs to the binding-protein-dependent transport system permease family. UgpAE subfamily. As to quaternary structure, the complex is composed of two ATP-binding proteins (UgpC), two transmembrane proteins (UgpA and UgpE) and a solute-binding protein (UgpB).

The protein localises to the cell inner membrane. Functionally, part of the ABC transporter complex UgpBAEC involved in sn-glycerol-3-phosphate (G3P) import. Probably responsible for the translocation of the substrate across the membrane. The chain is sn-glycerol-3-phosphate transport system permease protein UgpA (ugpA) from Escherichia coli O157:H7.